The sequence spans 119 residues: Large ribosomal subunit protein bL19 (119 aa).

The protein belongs to the bacterial ribosomal protein bL19 family.

In terms of biological role, this protein is located at the 30S-50S ribosomal subunit interface and may play a role in the structure and function of the aminoacyl-tRNA binding site. The protein is Large ribosomal subunit protein bL19 of Pseudoalteromonas atlantica (strain T6c / ATCC BAA-1087).